Here is an 803-residue protein sequence, read N- to C-terminus: MTCQLQAQPLIPYNVLAGVPTSNTGSPIGNAGNQFDQFEQTVKELKEAWEAFQKNGSFSLAALEKGFDAAIGGGSFDYLGLVQAGLGLVGTLGAAIPGVSVAVPLISMLVGVFWPKGTNNQENLITVIDKEVQRILDEKLSDQLIKKLNADLNAFTDLVTRLEEVIIDATFENHKPVLQVSKSNYMKVDSAYFSTGGILTLGMSDFLTDTYSKLTFPLYVLGATMKLSAYHSYIQFGNTWLNKVYDLSSDEGKTMSQALARAKQHMRQDIAFYTSQALNMFTGNLPSLSSNKYAINDYNVYTRAMVLNGLDIVATWPTLYPDDYSSQIKLEKTRVIFSDMVGQSESRDGSVTIKNIFDNTDSHQHGSIGLNSISYFPDELQKAQLRMYDYNHKPYCTDCFCWPYGVILNYNKNTFRYGDNDPGLSGDVQLPAPMSVVNAQTQTAQYTDGENIWTDTGRSWLCTLRGYCTTNCFPGRGCYNNSTGYGESCNQSLPGQKIHALYPFTQTNVLGQSGKLGLLASHIPYDLSPNNTIGDKDTDSTNIVAKGIPVEKGYASSGQKVEIIREWINGANVVQLSPGQSWGMDFTNSTGGQYMVRCRYASTNDTPIFFNLVYDGGSNPIYNQMTFPATKETPAHDSVDNKILGIKGINGNYSLMNVKDSVELPSGKFHVFFTNNGSSAIYLDRLEFVPLDQPAAPTQSTQPINYPITSRLPHRSGEPPAIIWEKSGNVRGNQLTISAQGVPENSQIYLSVGGDRQILDRSNGFKLVNYSPTYSFTNIQASSSNLVDITSGTITGQVQVSNL.

It belongs to the delta endotoxin family.

Its function is as follows. Endotoxin with nematicidal activity. This chain is Pesticidal crystal protein Cry13Aa (cry13Aa), found in Bacillus thuringiensis.